Reading from the N-terminus, the 123-residue chain is Holo-[acyl-carrier-protein] synthase (123 aa).

Positions 8 and 60 each coordinate Mg(2+).

This sequence belongs to the P-Pant transferase superfamily. AcpS family. Mg(2+) is required as a cofactor.

The protein resides in the cytoplasm. It catalyses the reaction apo-[ACP] + CoA = holo-[ACP] + adenosine 3',5'-bisphosphate + H(+). Transfers the 4'-phosphopantetheine moiety from coenzyme A to a Ser of acyl-carrier-protein. The polypeptide is Holo-[acyl-carrier-protein] synthase (Ehrlichia ruminantium (strain Gardel)).